The chain runs to 238 residues: Ribonuclease PH (238 aa).

Phosphate is bound by residues R86 and 124 to 126 (GTR).

The protein belongs to the RNase PH family. As to quaternary structure, homohexameric ring arranged as a trimer of dimers.

It carries out the reaction tRNA(n+1) + phosphate = tRNA(n) + a ribonucleoside 5'-diphosphate. Functionally, phosphorolytic 3'-5' exoribonuclease that plays an important role in tRNA 3'-end maturation. Removes nucleotide residues following the 3'-CCA terminus of tRNAs; can also add nucleotides to the ends of RNA molecules by using nucleoside diphosphates as substrates, but this may not be physiologically important. Probably plays a role in initiation of 16S rRNA degradation (leading to ribosome degradation) during starvation. In Yersinia enterocolitica serotype O:8 / biotype 1B (strain NCTC 13174 / 8081), this protein is Ribonuclease PH.